Here is a 138-residue protein sequence, read N- to C-terminus: Putative pre-16S rRNA nuclease (138 aa).

It belongs to the YqgF nuclease family.

It is found in the cytoplasm. Could be a nuclease involved in processing of the 5'-end of pre-16S rRNA. This is Putative pre-16S rRNA nuclease from Klebsiella pneumoniae (strain 342).